A 283-amino-acid chain; its full sequence is MSRSDWIFISLQGFFCLAGVIWKSREGYPIIDFPCPLQFIDSSDATLSYGTTSPWFGFRAVASMQSIWDNGPWFWLHLMLYIAQLVGLILIILHETVPHGAFLRKFESLAALGYLSYTVGLSTAFPVFSLWILNQYRAEKLVTAWPRRQEKAFLRTIFWCTGISHIGIFMVAIVATLLHRDATAPFHIGNSLLGVPDCSQFPCSEIAARHARLRQINEMTGTSSGFFLTVGLFSQALEAENKHLSLRVMVRMFFVSLIAGPAAGSADVLLLRDSITRSKKDCG.

Residues M1–G27 form the signal peptide. 5 consecutive transmembrane segments (helical) span residues W73 to L93, L112 to I132, I157 to L177, M219 to A239, and V250 to L270.

Belongs to the ltmS family.

Its subcellular location is the membrane. In terms of biological role, part of the gene cluster that mediates the biosynthesis of lolitrems, indole-diterpene mycotoxins that are potent tremorgens in mammals, and are synthesized by clavicipitaceous fungal endophytes in association with their grass hosts. The geranylgeranyl diphosphate (GGPP) synthase ltmG is proposed to catalyze the first step in lolitrem biosynthesis. LtmG catalyzes a series of iterative condensations of isopentenyl diphosphate (IPP) with dimethylallyl diphosphate (DMAPP), geranyl diphosphate (GPP), and farnesyl diphosphate (FPP), to form GGPP. GGPP then condenses with indole-3-glycerol phosphate to form 3-geranylgeranylindole, an acyclic intermediate, to be incorporated into paxilline. Either ltmG or ltmC could be responsible for this step, as both are putative prenyl transferases. The FAD-dependent monooxygenase ltmM then catalyzes the epoxidation of the two terminal alkenes of the geranylgeranyl moiety, which is subsequently cyclized by ltmB, to paspaline. The cytochrome P450 monooxygenases ltmQ and ltmP can sequentially oxidize paspaline to terpendole E and terpendole F. Alternatively, ltmP converts paspaline to an intermediate which is oxidized by ltmQ to terpendole F. LtmF, ltmK, ltmE and ltmJ appear to be unique to the epichloe endophytes. The prenyltransferase ltmF is involved in the 27-hydroxyl-O-prenylation. The cytochrome P450 monooxygenase ltmK is required for the oxidative acetal ring formation. The multi-functional prenyltransferase ltmE is required for C20- and C21-prenylations of the indole ring of paspalanes and acts together with the cytochrome P450 monooxygenase ltmJ to yield lolitremanes by multiple oxidations and ring closures. The stereoisomer pairs of lolitriol and lolitrem N or lolitrem B and lolitrem F may be attributed to variations in the way in which ring closure can occur under the action of ltmJ. While the major product of this pathway is lolitrem B, the prenyl transferases and cytochrome P450 monooxygenases identified in this pathway have a remarkable versatility in their regio- and stereo-specificities to generate a diverse range of metabolites that are products of a metabolic grid rather than a linear pathway. This Epichloe festucae (strain Fl1) protein is Lolitrem B biosynthesis cluster protein S.